The chain runs to 96 residues: CRISPR-associated endoribonuclease Cas2 1 (96 aa).

D8 contributes to the Mg(2+) binding site.

The protein belongs to the CRISPR-associated endoribonuclease Cas2 protein family. Homodimer, forms a heterotetramer with a Cas1 homodimer. It depends on Mg(2+) as a cofactor.

Its function is as follows. CRISPR (clustered regularly interspaced short palindromic repeat), is an adaptive immune system that provides protection against mobile genetic elements (viruses, transposable elements and conjugative plasmids). CRISPR clusters contain sequences complementary to antecedent mobile elements and target invading nucleic acids. CRISPR clusters are transcribed and processed into CRISPR RNA (crRNA). Functions as a ssRNA-specific endoribonuclease. Involved in the integration of spacer DNA into the CRISPR cassette. The sequence is that of CRISPR-associated endoribonuclease Cas2 1 from Moorella thermoacetica (strain ATCC 39073 / JCM 9320).